Consider the following 243-residue polypeptide: Probable 2-phosphosulfolactate phosphatase (243 aa).

The protein belongs to the ComB family. The cofactor is Mg(2+).

The enzyme catalyses (2R)-O-phospho-3-sulfolactate + H2O = (2R)-3-sulfolactate + phosphate. In Synechococcus sp. (strain CC9605), this protein is Probable 2-phosphosulfolactate phosphatase.